A 98-amino-acid chain; its full sequence is NADH-ubiquinone oxidoreductase chain 4L (98 aa).

3 helical membrane-spanning segments follow: residues 2–22, 29–49, and 61–81; these read PPIF…TLIF, SLLC…LIIL, and ILLL…LVMV.

The protein belongs to the complex I subunit 4L family. Core subunit of respiratory chain NADH dehydrogenase (Complex I) which is composed of 45 different subunits.

The protein resides in the mitochondrion inner membrane. It carries out the reaction a ubiquinone + NADH + 5 H(+)(in) = a ubiquinol + NAD(+) + 4 H(+)(out). Core subunit of the mitochondrial membrane respiratory chain NADH dehydrogenase (Complex I) which catalyzes electron transfer from NADH through the respiratory chain, using ubiquinone as an electron acceptor. Part of the enzyme membrane arm which is embedded in the lipid bilayer and involved in proton translocation. This chain is NADH-ubiquinone oxidoreductase chain 4L (MT-ND4L), found in Avahi unicolor (Sambirano woolly lemur).